A 326-amino-acid polypeptide reads, in one-letter code: Trans-L-3-hydroxyproline dehydratase (326 aa).

Cysteine 80 functions as the Proton acceptor in the catalytic mechanism. Residues 81–82, aspartate 241, and 246–247 each bind substrate; these read GH and GS.

Belongs to the proline racemase family. In terms of assembly, homodimer.

It carries out the reaction trans-3-hydroxy-L-proline = 1-pyrroline-2-carboxylate + H2O. Its function is as follows. Catalyzes the dehydration of trans-3-hydroxy-L-proline to delta-1-pyrroline-2-carboxylate (Pyr2C). This Saccoglossus kowalevskii (Acorn worm) protein is Trans-L-3-hydroxyproline dehydratase (l3hypdh).